The chain runs to 258 residues: C4b-binding protein beta chain (258 aa).

A signal peptide spans 1–15 (MLCLVVCCLIWLISA). Residues 18–75 (GSCSEPPPVNNSVFVGKETEEQILGIYLCIKGYHLVGKKSLVFDPSKEWNSTLPECLL) form the Sushi 1; atypical; lacks a Cys domain. N-linked (GlcNAc...) asparagine glycosylation is found at Asn27, Asn67, Asn89, Asn95, and Asn114. 5 disulfide bridges follow: Cys46-Cys73, Cys78-Cys118, Cys104-Cys131, Cys136-Cys176, and Cys162-Cys188. Sushi domains follow at residues 76–133 (GHCP…ICRS) and 134–190 (RDCE…TCES). Asn218 carries an N-linked (GlcNAc...) asparagine glycan.

Disulfide-linked complex of alpha and beta chains.

It is found in the secreted. Its function is as follows. Controls the classical pathway of complement activation. It binds as a cofactor to C3b/C4b inactivator (C3bINA), which then hydrolyzes the complement fragment C4b. It also accelerates the degradation of the C4bC2a complex (C3 convertase) by dissociating the complement fragment C2a. It also interacts with anticoagulant protein S and with serum amyloid P component. The protein is C4b-binding protein beta chain (C4bpb) of Rattus norvegicus (Rat).